Consider the following 166-residue polypeptide: Small ribosomal subunit protein uS5 (166 aa).

One can recognise an S5 DRBM domain in the interval 10 to 73 (QIEKLISLNR…TSARKNLRFV (64 aa)).

It belongs to the universal ribosomal protein uS5 family. In terms of assembly, part of the 30S ribosomal subunit. Contacts proteins S4 and S8.

Functionally, with S4 and S12 plays an important role in translational accuracy. Located at the back of the 30S subunit body where it stabilizes the conformation of the head with respect to the body. This is Small ribosomal subunit protein uS5 from Borrelia garinii subsp. bavariensis (strain ATCC BAA-2496 / DSM 23469 / PBi) (Borreliella bavariensis).